The sequence spans 510 residues: ATP synthase subunit alpha (510 aa).

Residue 169–176 (GDRQTGKT) coordinates ATP.

This sequence belongs to the ATPase alpha/beta chains family. F-type ATPases have 2 components, CF(1) - the catalytic core - and CF(0) - the membrane proton channel. CF(1) has five subunits: alpha(3), beta(3), gamma(1), delta(1), epsilon(1). CF(0) has four main subunits: a(1), b(1), b'(1) and c(9-12).

The protein resides in the cell inner membrane. The catalysed reaction is ATP + H2O + 4 H(+)(in) = ADP + phosphate + 5 H(+)(out). Functionally, produces ATP from ADP in the presence of a proton gradient across the membrane. The alpha chain is a regulatory subunit. The polypeptide is ATP synthase subunit alpha (Rhodopseudomonas palustris (strain BisB18)).